The following is a 160-amino-acid chain: SsrA-binding protein (160 aa).

The protein belongs to the SmpB family.

It is found in the cytoplasm. Functionally, required for rescue of stalled ribosomes mediated by trans-translation. Binds to transfer-messenger RNA (tmRNA), required for stable association of tmRNA with ribosomes. tmRNA and SmpB together mimic tRNA shape, replacing the anticodon stem-loop with SmpB. tmRNA is encoded by the ssrA gene; the 2 termini fold to resemble tRNA(Ala) and it encodes a 'tag peptide', a short internal open reading frame. During trans-translation Ala-aminoacylated tmRNA acts like a tRNA, entering the A-site of stalled ribosomes, displacing the stalled mRNA. The ribosome then switches to translate the ORF on the tmRNA; the nascent peptide is terminated with the 'tag peptide' encoded by the tmRNA and targeted for degradation. The ribosome is freed to recommence translation, which seems to be the essential function of trans-translation. The protein is SsrA-binding protein of Novosphingobium aromaticivorans (strain ATCC 700278 / DSM 12444 / CCUG 56034 / CIP 105152 / NBRC 16084 / F199).